The following is a 425-amino-acid chain: Diacetylchitobiose binding protein DasA (425 aa).

The N-terminal stretch at methionine 1–alanine 20 is a signal peptide. The N-palmitoyl cysteine moiety is linked to residue cysteine 21. The S-diacylglycerol cysteine moiety is linked to residue cysteine 21.

The protein belongs to the bacterial solute-binding protein 1 family. In terms of assembly, the complex is composed of two ATP-binding proteins (MsiK), two transmembrane proteins (DasB and DasC) and a solute-binding protein (DasA).

The protein resides in the cell membrane. Its function is as follows. Part of the ABC transporter complex DasABC-MsiK involved in N,N'-diacetylchitobiose ((GlcNAc)2) uptake. Binds specifically to (GlcNAc)2. Can also bind to GlcNAc, (GlcNAc)3, (GlcNAc)4 and (GlcNAc)5, but it exhibits the highest affinity for (GlcNAc)2. Involved in the control of morphological differentiation. The chain is Diacetylchitobiose binding protein DasA from Streptomyces coelicolor (strain ATCC BAA-471 / A3(2) / M145).